Consider the following 399-residue polypeptide: MINTNDMFYAKSSDAEIAEAGEYGGAVTTLLKFLLKEGIVDAVLAVDSSADLYDVVPILIEDPEDVVKAAGSLHFGTLNLAKVVTRYLDGAQDMKIAVTVKPCDAMTMVELMKREKVNADNVIMVGLNCGGTMPPVKGRQMMEEFYEVDPDSVVKEEIAKGKLIVETEDGTEKEIPIDELEDEGFGRRTNCRRCEVNIPRMADLACGNWGVIGPLAGKATFIEVCSPKGAEVLEKAKEAGVIDLEDPIPKGIEIREKIDGAMVKLADKWQGNDWEDKAGREIFSVLTEYMDDFSRCLKCYGCREACPICYCEDCCLEANNGPDWLSKGEIPPSPMFHLERMLHMVESCTNCGQCEEVCPGEIPLAKIWHEVNAKMKDTFGYVKGTGDEKPPIAYFPVGK.

4Fe-4S ferredoxin-type domains follow at residues 287-307 (TEYM…EACP) and 339-367 (ERML…LAKI). [4Fe-4S] cluster contacts are provided by Cys296, Cys299, Cys302, Cys306, Cys348, Cys351, Cys354, and Cys358.

The protein belongs to the FrhB family. In terms of assembly, dimer of an alpha (FdhA) and a beta (FdhB) subunit. The cofactor is [4Fe-4S] cluster. FAD is required as a cofactor. Requires Zn(2+) as cofactor.

It catalyses the reaction oxidized coenzyme F420-(gamma-L-Glu)(n) + formate + 2 H(+) = reduced coenzyme F420-(gamma-L-Glu)(n) + CO2. Is extremely sensitive to oxygen. Contains a FAD that is required for coenzyme F420-dependent activity but not for methyl viologen-dependent activity. Preincubation of the FAD-depleted enzyme with FAD restores coenzyme F420-dependent activity. Neither FMN nor FADH2 can replace FAD. Strongly inhibited by cyanide, azide, alpha,alpha-dipyridyl and 1,10-phenanthroline. Its function is as follows. Catalyzes the oxidation of formate to carbon dioxide, with coenzyme F420 as the electron acceptor. In vitro can also use methyl viologen, 7,8-didemethyl-8-hydroxy-5-deazariboflavin (or FO, a hydrolytic derivative of coenzyme F420), FMN and FAD as electron acceptors, but not NAD(+) or NADP(+). The chain is F420-dependent formate dehydrogenase subunit beta from Methanobacterium formicicum.